Consider the following 124-residue polypeptide: NADH-quinone oxidoreductase subunit K (124 aa).

A run of 3 helical transmembrane segments spans residues 28 to 48, 52 to 72, and 84 to 104; these read MEHGLILAAIIFAIGLCGVMV, FLFMLMSLEIMMSAAGLAFIV, and IMFIFILTLAAAEASLGLAIL.

The protein belongs to the complex I subunit 4L family. NDH-1 is composed of 14 different subunits. Subunits NuoA, H, J, K, L, M, N constitute the membrane sector of the complex.

It is found in the cell inner membrane. It catalyses the reaction a quinone + NADH + 5 H(+)(in) = a quinol + NAD(+) + 4 H(+)(out). In terms of biological role, NDH-1 shuttles electrons from NADH, via FMN and iron-sulfur (Fe-S) centers, to quinones in the respiratory chain. The immediate electron acceptor for the enzyme in this species is believed to be ubiquinone. Couples the redox reaction to proton translocation (for every two electrons transferred, four hydrogen ions are translocated across the cytoplasmic membrane), and thus conserves the redox energy in a proton gradient. In Psychrobacter sp. (strain PRwf-1), this protein is NADH-quinone oxidoreductase subunit K.